Reading from the N-terminus, the 50-residue chain is Peroxiredoxin-6 (50 aa).

One can recognise a Thioredoxin domain in the interval 1–50 (DFTPVCTTELGRLAPEFAKRVVFIFGPDKKLKLSILYPATTGRNFDEILR). Residue Thr-3 is modified to Phosphothreonine. Cys-6 functions as the Cysteine sulfenic acid (-SOH) intermediate; for peroxidase activity in the catalytic mechanism. Lys-19 carries the N6-acetyllysine modification. Asp-28 serves as the catalytic For phospholipase activity.

The protein belongs to the peroxiredoxin family. Prx6 subfamily. In terms of assembly, homodimer. Interacts with GSTP1; mediates PRDX6 glutathionylation and regeneration. Interacts with APEX1. Interacts with STH. May interact with FAM168B. May interact with HTR2A. Post-translationally, irreversibly inactivated by overoxidation of Cys-6 to sulfinic acid (Cys-SO(2)H) and sulfonic acid (Cys-SO(3)H) forms upon oxidative stress. In terms of processing, phosphorylation at Thr-177 by MAP kinases increases the phospholipase activity of the enzyme. The phosphorylated form exhibits a greater lysophosphatidylcholine acyltransferase activity compared to the non-phosphorylated form.

Its subcellular location is the cytoplasm. It localises to the lysosome. It catalyses the reaction a hydroperoxide + 2 glutathione = an alcohol + glutathione disulfide + H2O. The enzyme catalyses a 1,2-diacyl-sn-glycero-3-phosphocholine + H2O = a 1-acyl-sn-glycero-3-phosphocholine + a fatty acid + H(+). It carries out the reaction a 1-acyl-sn-glycero-3-phosphocholine + an acyl-CoA = a 1,2-diacyl-sn-glycero-3-phosphocholine + CoA. The catalysed reaction is 1-hexadecanoyl-sn-glycero-3-phosphocholine + hexadecanoyl-CoA = 1,2-dihexadecanoyl-sn-glycero-3-phosphocholine + CoA. It catalyses the reaction 1,2-dihexadecanoyl-sn-glycero-3-phosphocholine + H2O = 1-hexadecanoyl-sn-glycero-3-phosphocholine + hexadecanoate + H(+). In terms of biological role, thiol-specific peroxidase that catalyzes the reduction of hydrogen peroxide and organic hydroperoxides to water and alcohols, respectively. Can reduce H(2)O(2) and short chain organic, fatty acid, and phospholipid hydroperoxides. Also has phospholipase activity, and can therefore either reduce the oxidized sn-2 fatty acyl group of phospholipids (peroxidase activity) or hydrolyze the sn-2 ester bond of phospholipids (phospholipase activity). These activities are dependent on binding to phospholipids at acidic pH and to oxidized phospholipds at cytosolic pH. Plays a role in cell protection against oxidative stress by detoxifying peroxides and in phospholipid homeostasis. Exhibits acyl-CoA-dependent lysophospholipid acyltransferase which mediates the conversion of lysophosphatidylcholine (1-acyl-sn-glycero-3-phosphocholine or LPC) into phosphatidylcholine (1,2-diacyl-sn-glycero-3-phosphocholine or PC). Shows a clear preference for LPC as the lysophospholipid and for palmitoyl CoA as the fatty acyl substrate. In Mesocricetus auratus (Golden hamster), this protein is Peroxiredoxin-6.